The following is a 426-amino-acid chain: 26S proteasome regulatory subunit 7 (426 aa).

ATP is bound at residue Gly209–Thr216.

Belongs to the AAA ATPase family.

It is found in the cytoplasm. The protein resides in the nucleus. Functionally, the 26S proteasome is involved in the ATP-dependent degradation of ubiquitinated proteins. The regulatory (or ATPase) complex confers ATP dependency and substrate specificity to the 26S complex. In Spinacia oleracea (Spinach), this protein is 26S proteasome regulatory subunit 7 (RPT1).